Consider the following 415-residue polypeptide: Corticotropin-releasing factor receptor 1 (415 aa).

The first 23 residues, 1–23, serve as a signal peptide directing secretion; sequence MGRRPQLRLVKALLLLGLNPVST. The Extracellular segment spans residues 24–111; it reads SLQDQRCENL…CQEILNEEKK (88 aa). 3 disulfide bridges follow: cysteine 30–cysteine 54, cysteine 44–cysteine 87, and cysteine 68–cysteine 102. 5 N-linked (GlcNAc...) asparagine glycosylation sites follow: asparagine 38, asparagine 45, asparagine 78, asparagine 90, and asparagine 98. Positions 99 to 108 are important for peptide agonist binding; sequence YSECQEILNE. The chain crosses the membrane as a helical span at residues 112–142; it reads SKVHYHVAVIINYLGHCISLVALLVAFVLFL. The Cytoplasmic segment spans residues 143 to 149; the sequence is RLRSIRC. Residues 150-174 form a helical membrane-spanning segment; that stretch reads LRNIIHWNLISAFILRNATWFVVQL. Topologically, residues 175 to 189 are extracellular; sequence TVSPEVHQSNVAWCR. Residues cysteine 188 and cysteine 258 are joined by a disulfide bond. A helical membrane pass occupies residues 190 to 218; that stretch reads LVTAAYNYFHVTNFFWMFGEGCYLHTAIV. At 219–225 the chain is on the cytoplasmic side; it reads LTYSTDR. The chain crosses the membrane as a helical span at residues 226–253; it reads LRKWMFVCIGWGVPFPIIVAWAIGKLHY. Residues 254–269 are Extracellular-facing; that stretch reads DNEKCWFGKRPGVYTD. A helical transmembrane segment spans residues 270–295; sequence YIYQGPMILVLLINFIFLFNIVRILM. Positions 280–290 are important for antagonist binding; it reads LLINFIFLFNI. At 296–306 the chain is on the cytoplasmic side; the sequence is TKLRASTTSET. Serine 301 carries the phosphoserine; by PKA modification. Residues 307–331 traverse the membrane as a helical segment; the sequence is IQYRKAVKATLVLLPLLGITYMLFF. Topologically, residues 332 to 338 are extracellular; that stretch reads VNPGEDE. A helical membrane pass occupies residues 339–368; it reads VSRVVFIYFNSFLESFQGFFVSVFYCFLNS. At 369 to 415 the chain is on the cytoplasmic side; sequence EVRSAIRKRWRRWQDKHSIRARVARAMSIPTSPTRVSFHSIKQSTAV.

The protein belongs to the G-protein coupled receptor 2 family. As to quaternary structure, interacts (via N-terminal extracellular domain) with CRH and UCN. Interacts with DLG1; this inhibits endocytosis of CRHR1 after agonist binding. Heterodimer; heterodimerizes with GPER1. In terms of processing, C-terminal Ser or Thr residues may be phosphorylated. Post-translationally, phosphorylation at Ser-301 by PKA prevents maximal coupling to Gq-protein, and thereby negatively regulates downstream signaling. Detected in brain, especially in cerebellum. Detected in pituitary gland, and at lower levels in the olfactory bulb.

It is found in the cell membrane. The protein localises to the endosome. G-protein coupled receptor for CRH (corticotropin-releasing factor) and UCN (urocortin). Has high affinity for CRH and UCN. Ligand binding causes a conformation change that triggers signaling via guanine nucleotide-binding proteins (G proteins) and down-stream effectors, such as adenylate cyclase. Promotes the activation of adenylate cyclase, leading to increased intracellular cAMP levels. Inhibits the activity of the calcium channel CACNA1H. Required for normal embryonic development of the adrenal gland and for normal hormonal responses to stress. Plays a role in the response to anxiogenic stimuli. This chain is Corticotropin-releasing factor receptor 1 (Crhr1), found in Rattus norvegicus (Rat).